The primary structure comprises 442 residues: MRLSRFFMPILKENPKEAEIVSHRLMLRTGMIRQQSAGIYTWLPLGKRVLDKVNAVIREEQNRSGAIELLMPTLQSAELWQESGRYDAYGKEMLRIKDRQDRPMLYGPTNEEMITDIFRSYVKSYRNLPLNLYHIQLKFRDEIRPRFGTMRSREFLMKDAYSFDLDRAGAEHAYKRMFAAYLRTFDRLGLRAIPMRADTGPIGGNLSHEFIILADTGESEVFCHKDFLGFDIPGEDTNFDDVASMNAIFEKWTSRYAATSEMHEEAAFDAIPEGERLSARGIEVGHIFYFGTKYSEAMGAKVLGPDGKEHTVHMGSYGIGPTRLVPAIIEASHDDNGIIWPKGIAPFDIVVINMKTGDDACDTACGRLYSDLGKAGFDVLLDDTDERAGGKFATADIIGVPVQVIVGPRSIANGEVEVKDRKTGARETMTVEAAINKLVAAR.

It belongs to the class-II aminoacyl-tRNA synthetase family. ProS type 2 subfamily. As to quaternary structure, homodimer.

Its subcellular location is the cytoplasm. It catalyses the reaction tRNA(Pro) + L-proline + ATP = L-prolyl-tRNA(Pro) + AMP + diphosphate. In terms of biological role, catalyzes the attachment of proline to tRNA(Pro) in a two-step reaction: proline is first activated by ATP to form Pro-AMP and then transferred to the acceptor end of tRNA(Pro). The polypeptide is Proline--tRNA ligase (Sinorhizobium medicae (strain WSM419) (Ensifer medicae)).